The following is a 689-amino-acid chain: Protein CFAP20DC (689 aa).

3 disordered regions span residues 241–263 (LKST…NRIE), 333–423 (SKES…GPSE), and 584–659 (ISTS…DLSV). Composition is skewed to polar residues over residues 251-260 (TPSGSSSGNN) and 343-359 (EESQ…SSRP). The segment covering 394 to 405 (SEDDFYGGDSSE) has biased composition (acidic residues). A compositionally biased stretch (polar residues) spans 409 to 421 (HSIQGSRGPTTGP). Over residues 584-593 (ISTSSDDTTT) the composition is skewed to low complexity.

This chain is Protein CFAP20DC, found in Homo sapiens (Human).